The following is a 486-amino-acid chain: Ribulose bisphosphate carboxylase large chain (486 aa).

Substrate-binding residues include N125 and T175. The Proton acceptor role is filled by K177. K179 contacts substrate. Positions 203, 205, and 206 each coordinate Mg(2+). An N6-carboxylysine modification is found at K203. H295 acts as the Proton acceptor in catalysis. 3 residues coordinate substrate: R296, H328, and S380.

This sequence belongs to the RuBisCO large chain family. Type I subfamily. Heterohexadecamer of 8 large chains and 8 small chains. Requires Mg(2+) as cofactor.

The enzyme catalyses 2 (2R)-3-phosphoglycerate + 2 H(+) = D-ribulose 1,5-bisphosphate + CO2 + H2O. The catalysed reaction is D-ribulose 1,5-bisphosphate + O2 = 2-phosphoglycolate + (2R)-3-phosphoglycerate + 2 H(+). RuBisCO catalyzes two reactions: the carboxylation of D-ribulose 1,5-bisphosphate, the primary event in carbon dioxide fixation, as well as the oxidative fragmentation of the pentose substrate. Both reactions occur simultaneously and in competition at the same active site. This is Ribulose bisphosphate carboxylase large chain from Aurantimonas manganoxydans (strain ATCC BAA-1229 / DSM 21871 / SI85-9A1).